A 391-amino-acid chain; its full sequence is Casein kinase II subunit alpha (391 aa).

The segment at 36–41 is interaction with beta subunit; that stretch reads QDDYQL. The Protein kinase domain occupies 39-324; it reads YQLVRKLGRG…AREAMEHPYF (286 aa). ATP-binding positions include 45-53 and Lys68; that span reads LGRGKYSEV. The active-site Proton acceptor is the Asp156. Residues Thr344 and Thr360 each carry the phosphothreonine; by CDK1 modification. Residues Ser362 and Ser370 each carry the phosphoserine; by CDK1 modification.

It belongs to the protein kinase superfamily. Ser/Thr protein kinase family. CK2 subfamily. In terms of assembly, heterotetramer composed of two catalytic subunits (alpha chain and/or alpha' chain) and two regulatory subunits (beta chains). The tetramer can exist as a combination of 2 alpha/2 beta, 2 alpha'/2 beta or 1 alpha/1 alpha'/2 beta subunits. Also part of a CK2-SPT16-SSRP1 complex composed of SSRP1, SUPT16H, CSNK2A1, CSNK2A2 and CSNK2B, which forms following UV irradiation. Interacts with RNPS1. Interacts with SNAI1. Interacts with PML. Interacts with CCAR2. Interacts with HIRIP3. In terms of processing, phosphorylated at Thr-344, Thr-360, Ser-362 and Ser-370 by CDK1 in prophase and metaphase and dephosphorylated during anaphase. Phosphorylation does not directly affect casein kinase 2 activity, but may contribute to its regulation by forming binding sites for interacting proteins and/or targeting it to different compartments.

The protein resides in the nucleus. It carries out the reaction L-seryl-[protein] + ATP = O-phospho-L-seryl-[protein] + ADP + H(+). The catalysed reaction is L-threonyl-[protein] + ATP = O-phospho-L-threonyl-[protein] + ADP + H(+). Its activity is regulated as follows. Constitutively active protein kinase whose activity is not directly affected by phosphorylation. Seems to be regulated by level of expression and localization. Functionally, catalytic subunit of a constitutively active serine/threonine-protein kinase complex that phosphorylates a large number of substrates containing acidic residues C-terminal to the phosphorylated serine or threonine. Regulates numerous cellular processes, such as cell cycle progression, apoptosis and transcription, as well as viral infection. May act as a regulatory node which integrates and coordinates numerous signals leading to an appropriate cellular response. During mitosis, functions as a component of the p53/TP53-dependent spindle assembly checkpoint (SAC) that maintains cyclin-B-CDK1 activity and G2 arrest in response to spindle damage. Also required for p53/TP53-mediated apoptosis, phosphorylating 'Ser-392' of p53/TP53 following UV irradiation. Phosphorylates a number of DNA repair proteins in response to DNA damage, such as MDC1, MRE11, RAD9A, RAD51 and HTATSF1, promoting their recruitment to DNA damage sites. Can also negatively regulate apoptosis. Phosphorylates the caspases CASP9 and CASP2 and the apoptotic regulator NOL3. Phosphorylation protects CASP9 from cleavage and activation by CASP8, and inhibits the dimerization of CASP2 and activation of CASP8. Phosphorylates YY1, protecting YY1 from cleavage by CASP7 during apoptosis. Regulates transcription by direct phosphorylation of RNA polymerases I, II, III and IV. Also phosphorylates and regulates numerous transcription factors including NF-kappa-B, STAT1, CREB1, IRF1, IRF2, ATF1, ATF4, SRF, MAX, JUN, FOS, MYC and MYB. Phosphorylates Hsp90 and its co-chaperones FKBP4 and CDC37, which is essential for chaperone function. Mediates sequential phosphorylation of FNIP1, promoting its gradual interaction with Hsp90, leading to activate both kinase and non-kinase client proteins of Hsp90. Regulates Wnt signaling by phosphorylating CTNNB1 and the transcription factor LEF1. Acts as an ectokinase that phosphorylates several extracellular proteins. Phosphorylates PML at 'Ser-565' and primes it for ubiquitin-mediated degradation. Plays an important role in the circadian clock function by phosphorylating BMAL1 at 'Ser-90' which is pivotal for its interaction with CLOCK and which controls CLOCK nuclear entry. Phosphorylates FMR1, promoting FMR1-dependent formation of a membraneless compartment. May phosphorylate histone H2A on 'Ser-1'. This is Casein kinase II subunit alpha (Csnk2a1) from Mus musculus (Mouse).